Consider the following 319-residue polypeptide: ATP-dependent 6-phosphofructokinase (319 aa).

ATP is bound at residue G11. 21–25 (RAVAR) provides a ligand contact to ADP. ATP contacts are provided by residues 72 to 73 (RY) and 102 to 105 (GDGS). Position 103 (D103) interacts with Mg(2+). 125-127 (TID) serves as a coordination point for substrate. D127 acts as the Proton acceptor in catalysis. Residue R154 coordinates ADP. Residues R162 and 169–171 (MGR) each bind substrate. Residues 185–187 (GAE) and R211 contribute to the ADP site. Residues E222, R243, and 249-252 (HIVR) contribute to the substrate site.

The protein belongs to the phosphofructokinase type A (PFKA) family. ATP-dependent PFK group I subfamily. Prokaryotic clade 'B1' sub-subfamily. In terms of assembly, homotetramer. Mg(2+) serves as cofactor.

The protein localises to the cytoplasm. It carries out the reaction beta-D-fructose 6-phosphate + ATP = beta-D-fructose 1,6-bisphosphate + ADP + H(+). Its pathway is carbohydrate degradation; glycolysis; D-glyceraldehyde 3-phosphate and glycerone phosphate from D-glucose: step 3/4. Its activity is regulated as follows. Allosterically activated by ADP and other diphosphonucleosides, and allosterically inhibited by phosphoenolpyruvate. In terms of biological role, catalyzes the phosphorylation of D-fructose 6-phosphate to fructose 1,6-bisphosphate by ATP, the first committing step of glycolysis. This is ATP-dependent 6-phosphofructokinase from Lacticaseibacillus casei (strain BL23) (Lactobacillus casei).